Consider the following 267-residue polypeptide: Probable tetrahydroxynaphthalene reductase MYCGRDRAFT_87994 (267 aa).

Residues I26, D72, N99, and R132 each contribute to the NADP(+) site. Residue S149 is the Proton donor of the active site. Residues Y163, K167, I196, and T198 each coordinate NADP(+). The active-site Proton acceptor is Y163. K167 serves as the catalytic Lowers pKa of active site Tyr.

The protein belongs to the short-chain dehydrogenases/reductases (SDR) family. Homotetramer.

It carries out the reaction scytalone + NADP(+) = naphthalene-1,3,6,8-tetrol + NADPH + H(+). Its pathway is pigment biosynthesis; melanin biosynthesis. In terms of biological role, probable tetrahydroxynaphthalene reductase; part of the gene cluster 29 that mediates the biosynthesis dihydroxynaphthalene (DHN)-melanin, a bluish-green pigment and a structural component of the conidial wall. Catalyzes the NADPH-dependent reduction of 1,3,6,8-tetrahydroxynaphthalene (T4HN) into (+)-scytalone. The sequence is that of Probable tetrahydroxynaphthalene reductase MYCGRDRAFT_87994 from Zymoseptoria tritici (strain CBS 115943 / IPO323) (Speckled leaf blotch fungus).